The primary structure comprises 289 residues: Bidirectional sugar transporter SWEET10 (289 aa).

The Extracellular portion of the chain corresponds to 1–5 (MAISQ). Residues 6-26 (AVLATVFGILGNIISFFVCLA) form a helical membrane-spanning segment. The MtN3/slv 1 domain maps to 11 to 96 (VFGILGNIIS…SLFFFYAPKK (86 aa)). Residues 27–43 (PIPTFVRIYKRKSSEGY) are Cytoplasmic-facing. The chain crosses the membrane as a helical span at residues 44 to 64 (QSIPYVISLFSAMLWMYYAMI). Residues 65 to 70 (KKDAMM) are Extracellular-facing. A helical membrane pass occupies residues 71-91 (LITINSFAFVVQIVYISLFFF). The Cytoplasmic portion of the chain corresponds to 92–103 (YAPKKEKTLTVK). A helical transmembrane segment spans residues 104–124 (FVLFVDVLGFGAIFVLTYFII). The Extracellular portion of the chain corresponds to 125-131 (HANKRVQ). A MtN3/slv 2 domain is found at 131-214 (QVLGYICMVF…QMILFLIYKK (84 aa)). A helical transmembrane segment spans residues 132–152 (VLGYICMVFALSVFVAPLGII). Residues 153 to 165 (RKVIKTKSAEFMP) lie on the Cytoplasmic side of the membrane. A helical transmembrane segment spans residues 166-186 (FGLSFFLTLSAVMWFFYGLLL). Over 187–190 (KDMN) the chain is Extracellular. Residues 191–211 (IALPNVLGFIFGVLQMILFLI) traverse the membrane as a helical segment. Residues 212-289 (YKKPGTKVLE…EKEVFLISKN (78 aa)) are Cytoplasmic-facing.

The protein belongs to the SWEET sugar transporter family. In terms of assembly, forms heterooligomers with SWEET8.

The protein resides in the cell membrane. Mediates both low-affinity uptake and efflux of sugar across the plasma membrane. The chain is Bidirectional sugar transporter SWEET10 from Arabidopsis thaliana (Mouse-ear cress).